A 347-amino-acid polypeptide reads, in one-letter code: Putative [LysW]-L-2-aminoadipate/[LysW]-L-glutamate phosphate reductase (347 aa).

9 to 12 (SGYI) lines the NADP(+) pocket. The active site involves Cys149. Asn314 is a binding site for NADP(+).

The protein belongs to the NAGSA dehydrogenase family. Type 1 subfamily. LysY sub-subfamily.

Its subcellular location is the cytoplasm. The enzyme catalyses [amino-group carrier protein]-C-terminal-N-(1-carboxy-5-oxopentan-1-yl)-L-glutamine + phosphate + NADP(+) = [amino-group carrier protein]-C-terminal-N-(1-carboxy-5-phosphooxy-5-oxopentan-1-yl)-L-glutamine + NADPH + H(+). It catalyses the reaction [amino-group carrier protein]-C-terminal-gamma-(L-glutamyl-5-semialdehyde)-L-glutamate + phosphate + NADP(+) = [amino-group carrier protein]-C-terminal-gamma-(5-phospho-L-glutamyl)-L-glutamate + NADPH + H(+). It functions in the pathway amino-acid biosynthesis; L-lysine biosynthesis via AAA pathway; L-lysine from L-alpha-aminoadipate (Thermus route): step 3/5. The protein operates within amino-acid biosynthesis; L-arginine biosynthesis. In terms of biological role, involved in both the arginine and lysine biosynthetic pathways. This is Putative [LysW]-L-2-aminoadipate/[LysW]-L-glutamate phosphate reductase from Picrophilus torridus (strain ATCC 700027 / DSM 9790 / JCM 10055 / NBRC 100828 / KAW 2/3).